We begin with the raw amino-acid sequence, 567 residues long: MQIEKTAELNLLWGSLILEELARLEVQHVCMAPGSRSTPLTLAAAKQTKLKQHLHFDERGLGFLALGLAKASRAPVAIITTSGTAVANLYPAIVEAWLTQVPLIVLSGDRPPELLGCGANQAIVQPAIFADYAKQVNLPTPDMAIPPQALLTLLDESVANAKGPIHVNCMYREPLYPGSMSADFTHYLSPLGNWQHSALPYNQFADAQLVSAPTSDALARFVHGKGVIIAGTLAPEQQPEQLIELAQKLGWPLLTDAQSQLRQHGAAIGNIDQLLLQPKAKALLQEADTVLVFGGRLLSKRLISYLSEQKWKRYWQVLPQQTRLDPSHSAKQVWISPLAAFAQLPWPRSSEANWALQLIEANEQLATLFQQQIDDAEFGEAQVVRTIAGRGEQQLFIGNSLPVRLYDMYAPITPIAPRVFTNRGASGIDGLLATACGIAAHKASSTTLVIGDLSQLHDLNSLALAAKQQGTLVIVILNNDGGNIFNLLPVPDEKLRSGYYRLAHGLEFGYGAAMFGLPYNRVEDIVSFNEAYDDALAYPGASVIEVCVAQDQASEQIARLAAWIKQS.

It belongs to the TPP enzyme family. MenD subfamily. In terms of assembly, homodimer. The cofactor is Mg(2+). Mn(2+) serves as cofactor. Requires thiamine diphosphate as cofactor.

The catalysed reaction is isochorismate + 2-oxoglutarate + H(+) = 5-enolpyruvoyl-6-hydroxy-2-succinyl-cyclohex-3-ene-1-carboxylate + CO2. Its pathway is quinol/quinone metabolism; 1,4-dihydroxy-2-naphthoate biosynthesis; 1,4-dihydroxy-2-naphthoate from chorismate: step 2/7. It functions in the pathway quinol/quinone metabolism; menaquinone biosynthesis. Functionally, catalyzes the thiamine diphosphate-dependent decarboxylation of 2-oxoglutarate and the subsequent addition of the resulting succinic semialdehyde-thiamine pyrophosphate anion to isochorismate to yield 2-succinyl-5-enolpyruvyl-6-hydroxy-3-cyclohexene-1-carboxylate (SEPHCHC). This chain is 2-succinyl-5-enolpyruvyl-6-hydroxy-3-cyclohexene-1-carboxylate synthase, found in Shewanella loihica (strain ATCC BAA-1088 / PV-4).